The sequence spans 382 residues: MRILNVSLLVLTAFLVDFVECGRDFYKILGVSKNANANQIKKAYRKQAKELHPDRNPDDEMANEKFQDLSAAYEVLSDKEKRAMYDRHGEEGVAKMGGGGGGGHDPFSSFFGDFFGGGGGNGGDEGTPKGADVTIDLFVTLEEAYNGHFVEIKRKKAVYKQTSGTRQCNCRHEMRTEQMGQGRFQMFQVKVCDECPNVKLVQENKVLEVEVEVGADEGHTQIFHGEGEPHIEGDPGDLKFKIRIQKHPRFLISVTGIEIIELKVDELVELLLEGIRFERKGDDLYTNVTISLQDALNGFEMEILHLDGHMVKVQRDKVTWPGARLRKKDEGMPSMENNNKKGMLIVTFDVEFPKTELTDEQKAQIIEILQQQGIKPRAYNGL.

The first 21 residues, 1 to 21, serve as a signal peptide directing secretion; sequence MRILNVSLLVLTAFLVDFVEC. A J domain is found at 24–89; that stretch reads DFYKILGVSK…EKRAMYDRHG (66 aa).

The polypeptide is DnaJ homolog dnj-20 (Caenorhabditis briggsae).